Consider the following 68-residue polypeptide: conotoxin S11.3 (68 aa).

The signal sequence occupies residues 1–26 (MMFRLTSVSCFLLVIVCLNLFQVVLT). 4 disulfide bridges follow: Cys29-Cys43, Cys36-Cys48, Cys42-Cys52, and Cys47-Cys56. Residue Tyr60 is modified to Tyrosine amide. Residues 64–68 (ATFQE) constitute a propeptide that is removed on maturation.

Belongs to the conotoxin I2 superfamily. Expressed by the venom duct.

It is found in the secreted. This Conus striatus (Striated cone) protein is conotoxin S11.3.